Reading from the N-terminus, the 419-residue chain is Protein indeterminate-domain 14 (419 aa).

The segment at 1–58 (MIDYERSNTTKNINTHHHNPPPSSSSSDLLPDGNGTAVTQKRKRRPAGTPDPEAEVVS) is disordered. 3 consecutive C2H2-type zinc fingers follow at residues 70 to 92 (YVCEICNQGFQRDQNLQMHRRRH), 112 to 142 (YVCPEPTCLHHNPCHALGDLVGIKKHFRRKH), and 148 to 175 (WICERCSKGYAVQSDYKAHLKTCGTRGH). 8 residues coordinate Zn(2+): Cys-150, Cys-153, His-166, Cys-170, Cys-177, Cys-179, His-192, and Cys-196. A CCHC-type 2; atypical zinc finger spans residues 175 to 198 (HSCDCGRVFSRVESFIEHQDTCTV). Positions 185 to 197 (RVESFIEHQDTCT) are SHR-binding. Disordered regions lie at residues 200 to 259 (RSQP…PSTL) and 298 to 318 (SEVEKKSYEKGETSLEREEAR). Composition is skewed to low complexity over residues 213 to 230 (QHTTNATQTASTAENNEN) and 246 to 259 (RRQSPPSEQQPSTL). Residues 313–349 (EREEARRETKRQIEIAELEFAEAKRIRQHARAELHKA) adopt a coiled-coil conformation.

In terms of assembly, homo- and heterodimer of IDD14alpha and IDD14beta. Expressed in cotyledons and the vasculature of reosette leaves. Weak expression in hypocotyls and floral organs, but not detected in roots and inflorescence stems.

Its subcellular location is the nucleus. Functionally, transcription factor regulating starch metabolism by binding directly to the promoter of QQS. The IDD14beta isoform attenuates the transcription factor activity by competitively forming heterodimers with reduced DNA-binding capacity. Regulates lateral organ morphogenesis and gravitropic responses. Has a redundant role with IDD16 in directing leaf and floral organ morphogenesis. Involved in the establishment of auxin gradients through the regulation of auxin biosynthesis and transport. The chain is Protein indeterminate-domain 14 from Arabidopsis thaliana (Mouse-ear cress).